The sequence spans 244 residues: Claudin-12 (244 aa).

At 1–10 the chain is on the cytoplasmic side; it reads MGCRDVHAAT. A helical transmembrane segment spans residues 11 to 31; sequence VLSFLCGIASVAGLFAGTLLP. The Extracellular segment spans residues 32–87; that stretch reads NWRKLRLITFNRNEKNLTIYTGLWVKCARYDGSSDCLMYDRTWYLSVDQLDLRVLQ. The helical transmembrane segment at 88–108 threads the bilayer; it reads FALPLSIVIAMGALLLCLIGM. The Cytoplasmic portion of the chain corresponds to 109–135; sequence CNTAFNSSVPNIKLAKCLVNSAGCHLV. A helical transmembrane segment spans residues 136–156; the sequence is AGLLFFLAGTVSLSPSIWAIF. Residues 157-174 lie on the Extracellular side of the membrane; sequence YNSHLNRKFEPVFTFDYA. Residues 175 to 195 traverse the membrane as a helical segment; the sequence is VFVTIASSGGLFMTALLLFVW. At 196 to 244 the chain is on the cytoplasmic side; it reads YCACKSLSSPFWQPLYSHAPGMHTYSQPYSSRSRLSAIEIDIPVVSHST. 2 positions are modified to phosphoserine: serine 228 and serine 231.

This sequence belongs to the claudin family. Interacts with OCLN.

The protein localises to the cell junction. It is found in the tight junction. It localises to the cell membrane. In terms of biological role, plays a major role in tight junction-specific obliteration of the intercellular space, through calcium-independent cell-adhesion activity. The polypeptide is Claudin-12 (Cldn12) (Mus musculus (Mouse)).